We begin with the raw amino-acid sequence, 443 residues long: Cyclic GMP-AMP synthase (443 aa).

Residue S61 coordinates ATP. Catalysis depends on residues D78 and D80. A Mg(2+)-binding site is contributed by D80. Residue N124 coordinates ATP. D138 is an active-site residue. Position 138 (D138) interacts with Mg(2+). An ATP-binding site is contributed by L208.

It belongs to the CD-NTase family. B06 subfamily. Mg(2+) is required as a cofactor.

It carries out the reaction GTP + ATP = 3',3'-cGAMP + 2 diphosphate. It catalyses the reaction UTP + ATP = 3',3'-cUAMP + 2 diphosphate. The enzyme catalyses 2 ATP = 3',3'-c-di-AMP + 2 diphosphate. The catalysed reaction is 2 GTP = 3',3'-c-di-GMP + 2 diphosphate. It carries out the reaction UTP + GTP = 3',3'-cGMP-UMP + 2 diphosphate. Cyclic nucleotide synthase (second messenger synthase) of a CBASS antivirus system. CBASS (cyclic oligonucleotide-based antiphage signaling system) provides immunity against bacteriophages. The CD-NTase protein (CdnB, this protein) synthesizes cyclic nucleotides in response to infection; these serve as specific second messenger signals. The signals activate a diverse range of effectors, leading to bacterial cell death and thus abortive phage infection. The effector protein for this system is membrane protein Cap15. In terms of biological role, catalyzes the synthesis of 3',3'-cyclic GMP-AMP (3'3'-cGAMP) from GTP and ATP, a second messenger in cell signal transduction. Also makes cyclic UMP-AMP, cyclic UMP-GMP, cyclic di-AMP and cyclic-di-GMP. Functionally, protects E.coli against phage infection. When the CBASS operon (cdnB-cap15) is introduced in E.coli MG1655 there is about 100-fold protection against phage T2 and about 10-fold protection against phage T5 and T6. This Escherichia albertii protein is Cyclic GMP-AMP synthase.